Reading from the N-terminus, the 117-residue chain is Ubiquitin-like protein pmt3/smt3 (117 aa).

Positions 1 to 37 (MSESPSANISDADKSAITPTTGDTSQQDVKPSTEHIN) are disordered. Polar residues predominate over residues 17 to 30 (ITPTTGDTSQQDVK). Residues 35–115 (HINLKVVGQD…LEQLGGCTHL (81 aa)) enclose the Ubiquitin-like domain. G111 participates in a covalent cross-link: Glycyl lysine isopeptide (Gly-Lys) (interchain with K-? in acceptor proteins). The propeptide occupies 112–117 (CTHLCL).

The protein belongs to the ubiquitin family. SUMO subfamily. Interacts with rfp1.

The protein resides in the nucleus. In terms of biological role, required for chromosome segregation where it may be involved in microtubule assembly. Loss of smt3 leads to an increase in telomere length. The protein is Ubiquitin-like protein pmt3/smt3 (pmt3) of Schizosaccharomyces pombe (strain 972 / ATCC 24843) (Fission yeast).